Consider the following 186-residue polypeptide: Potassium-transporting ATPase KdpC subunit (186 aa).

A helical membrane pass occupies residues 10 to 30 (LTIITMVLCGFLFPLAITLIG).

The protein belongs to the KdpC family. The system is composed of three essential subunits: KdpA, KdpB and KdpC.

It localises to the cell membrane. Its function is as follows. Part of the high-affinity ATP-driven potassium transport (or Kdp) system, which catalyzes the hydrolysis of ATP coupled with the electrogenic transport of potassium into the cytoplasm. This subunit acts as a catalytic chaperone that increases the ATP-binding affinity of the ATP-hydrolyzing subunit KdpB by the formation of a transient KdpB/KdpC/ATP ternary complex. The protein is Potassium-transporting ATPase KdpC subunit of Staphylococcus aureus (strain MRSA252).